Consider the following 222-residue polypeptide: Ribosomal RNA small subunit methyltransferase I (222 aa).

Belongs to the methyltransferase superfamily. RsmI family.

Its subcellular location is the cytoplasm. The catalysed reaction is cytidine(1402) in 16S rRNA + S-adenosyl-L-methionine = 2'-O-methylcytidine(1402) in 16S rRNA + S-adenosyl-L-homocysteine + H(+). Its function is as follows. Catalyzes the 2'-O-methylation of the ribose of cytidine 1402 (C1402) in 16S rRNA. The polypeptide is Ribosomal RNA small subunit methyltransferase I (Thermotoga maritima (strain ATCC 43589 / DSM 3109 / JCM 10099 / NBRC 100826 / MSB8)).